Consider the following 331-residue polypeptide: MASLKNKHFMIGLSLTFIVALFSFLAAKLPILDKVGALTIAILIAILYRHFRGYPEQYSSGITFSSKYLLRFAIILYGLKLNIFDIIGQGSKLLAIDVGVVIFSIVMMLFVNKLLHGDKNIALLLGVGTGVCGAAAIAAVAPIFKSREKDTAISIGIIALIGTIFSLIYTAIYAIFSMTTNVYGAWSGVSLHEIAHVVLAGGFGGSDALKIALLGKLGRVFLLIPLTIVLILIMRFRSSESSSKGRISIPYFLIGFVIMALVNTYVTIPSVLLNILNTISTICLLMAMVALGLNVAFKDLKNRALKPLMTIIITSICLSSLAFIVVHWLYS.

A run of 11 helical transmembrane segments spans residues 9 to 26 (FMIG…SFLA), 31 to 48 (ILDK…AILY), 69 to 88 (LLRF…DIIG), 93 to 115 (LLAI…NKLL), 122 to 144 (ALLL…APIF), 154 to 176 (SIGI…YAIF), 183 to 202 (YGAW…LAGG), 217 to 234 (LGRV…ILIM), 247 to 269 (ISIP…VTIP), 273 to 295 (LNIL…GLNV), and 308 to 330 (LMTI…HWLY).

It belongs to the UPF0324 family.

It localises to the cell membrane. The polypeptide is UPF0324 membrane protein SA0329 (Staphylococcus aureus (strain N315)).